The sequence spans 189 residues: MKKIVLYGGQFNPIHTAHMIVASEVFHELQPDEFYFLPSFMSPLKKHNNFIDVQHRLTMIQMIIDELGFGDICDDEIKRGGQSYTYDTIKAFKEQHKDSELYFVIGTDQYNQLEKWYQIEYLKEMVTFVVVNRDKNSQNVENAMIAIQIPRVDISSTMIRQRVSEGKSIQVLVPKSVENYIKGEGLYEH.

Belongs to the NadD family.

The catalysed reaction is nicotinate beta-D-ribonucleotide + ATP + H(+) = deamido-NAD(+) + diphosphate. It functions in the pathway cofactor biosynthesis; NAD(+) biosynthesis; deamido-NAD(+) from nicotinate D-ribonucleotide: step 1/1. In terms of biological role, catalyzes the reversible adenylation of nicotinate mononucleotide (NaMN) to nicotinic acid adenine dinucleotide (NaAD). In Staphylococcus aureus (strain N315), this protein is Probable nicotinate-nucleotide adenylyltransferase.